Here is a 563-residue protein sequence, read N- to C-terminus: Grainyhead-like protein 1 homolog (563 aa).

In terms of domain architecture, Grh/CP2 DB spans 194-428; the sequence is NNLGFQYVLE…ELDKPAALFI (235 aa). Interaction with DNA regions lie at residues 326–335 and 372–375; these read TDFSTQKGVK and RKLR. Residues 377–405 form a disordered region; the sequence is EDKRAQKRKVQEYTAGALPGGRKKSDGEY.

It belongs to the grh/CP2 family. Grainyhead subfamily.

The protein localises to the nucleus. Probable transcription factor. Binds a motif with the core sequence 5'-C[ACT][TG]G-3' in regulatory elements of target genes. Many putative target genes show oscillating expression levels, perhaps as a result of rhythmic variation in accumulation of grh-1. Plays a role in proper cuticle formation and/or barrier function and is required repetitively during development, for successful completion of each molt. Involved in modulating lifespan. Plays a role in defense response to bacteria. May act upstream of the p38 MAP kinase / pmk-1 pathway. May act downstream of the insulin/IGF-1 receptor signaling (IIS) pathway. In Caenorhabditis elegans, this protein is Grainyhead-like protein 1 homolog.